The sequence spans 85 residues: UPF0297 protein Clos_1665 (85 aa).

This sequence belongs to the UPF0297 family.

The protein is UPF0297 protein Clos_1665 of Alkaliphilus oremlandii (strain OhILAs) (Clostridium oremlandii (strain OhILAs)).